A 970-amino-acid polypeptide reads, in one-letter code: Type III restriction-modification enzyme EcoPI Res subunit (970 aa).

The helicase-like domain stretch occupies residues alanine 75–valine 540. The segment at threonine 894 to lysine 918 is endonuclease domain.

The protein belongs to the type III restriction-modification system Res protein family. In terms of assembly, a heterotetramer with stoichiometry Res(2)Mod(2). Requires Mg(2+) as cofactor. S-adenosyl-L-methionine serves as cofactor.

It catalyses the reaction Endonucleolytic cleavage of DNA to give specific double-stranded fragments with terminal 5'-phosphates.. Functionally, a type III restriction enzyme that recognizes 2 inversely oriented double-stranded sequences 5'-AGACC-3' and cleaves DNA 25-27 base pairs downstream of one site, producing a single-strand 5' protrusion of two nucleotides. DNA restriction requires both the Res and Mod subunits. DNA topology affects its action; relaxed and negatively supercoiled DNA are digested but positively supercoiled DNA is not a good substrate. After binding to one recognition site undergoes random one-dimensional diffusion along DNA until it collides with a stationary enzyme bound to the second DNA site, which is when DNA cleavage occurs. The chain is Type III restriction-modification enzyme EcoPI Res subunit from Enterobacteriaceae (Bacteriophage P1).